The following is a 117-amino-acid chain: Ribonuclease P protein component (117 aa).

This sequence belongs to the RnpA family. Consists of a catalytic RNA component (M1 or rnpB) and a protein subunit.

The catalysed reaction is Endonucleolytic cleavage of RNA, removing 5'-extranucleotides from tRNA precursor.. In terms of biological role, RNaseP catalyzes the removal of the 5'-leader sequence from pre-tRNA to produce the mature 5'-terminus. It can also cleave other RNA substrates such as 4.5S RNA. The protein component plays an auxiliary but essential role in vivo by binding to the 5'-leader sequence and broadening the substrate specificity of the ribozyme. This Staphylococcus aureus (strain bovine RF122 / ET3-1) protein is Ribonuclease P protein component.